A 572-amino-acid polypeptide reads, in one-letter code: Glutamate--tRNA ligase (572 aa).

A 'HIGH' region motif is present at residues 112 to 122 (PNPNGPPSLGN).

It belongs to the class-I aminoacyl-tRNA synthetase family. Glutamate--tRNA ligase type 2 subfamily.

Its subcellular location is the cytoplasm. The catalysed reaction is tRNA(Glu) + L-glutamate + ATP = L-glutamyl-tRNA(Glu) + AMP + diphosphate. Its function is as follows. Catalyzes the attachment of glutamate to tRNA(Glu) in a two-step reaction: glutamate is first activated by ATP to form Glu-AMP and then transferred to the acceptor end of tRNA(Glu). The chain is Glutamate--tRNA ligase from Methanocella arvoryzae (strain DSM 22066 / NBRC 105507 / MRE50).